We begin with the raw amino-acid sequence, 115 residues long: MIIGIGIDVVDVERFRRQLERTPGLLDRLFVPAERSLNTRSLAARFAAKEAVAKALGAPAGMNWQDCWIGLDVNGPTVQTKNTVAAVAEAQGVKRWHLSMSHDGGISTAFVIAES.

Mg(2+) contacts are provided by D8 and E50.

It belongs to the P-Pant transferase superfamily. AcpS family. Mg(2+) serves as cofactor.

The protein resides in the cytoplasm. The enzyme catalyses apo-[ACP] + CoA = holo-[ACP] + adenosine 3',5'-bisphosphate + H(+). Functionally, transfers the 4'-phosphopantetheine moiety from coenzyme A to a Ser of acyl-carrier-protein. The chain is Holo-[acyl-carrier-protein] synthase from Renibacterium salmoninarum (strain ATCC 33209 / DSM 20767 / JCM 11484 / NBRC 15589 / NCIMB 2235).